We begin with the raw amino-acid sequence, 279 residues long: Tryptophan 2,3-dioxygenase (279 aa).

Residues 48-52, tyrosine 110, and arginine 114 each bind substrate; that span reads FIVIH. Histidine 237 lines the heme pocket. Threonine 251 provides a ligand contact to substrate.

This sequence belongs to the tryptophan 2,3-dioxygenase family. Homotetramer. Heme serves as cofactor.

It catalyses the reaction L-tryptophan + O2 = N-formyl-L-kynurenine. Its pathway is amino-acid degradation; L-tryptophan degradation via kynurenine pathway; L-kynurenine from L-tryptophan: step 1/2. Functionally, heme-dependent dioxygenase that catalyzes the oxidative cleavage of the L-tryptophan (L-Trp) pyrrole ring and converts L-tryptophan to N-formyl-L-kynurenine. Catalyzes the oxidative cleavage of the indole moiety. This Bacillus anthracis protein is Tryptophan 2,3-dioxygenase.